The primary structure comprises 344 residues: MARIIALDGAQGEGGGQILRSALSLSMITGQPFEMSGIRAGRAKPGLLRQHLTAVRAATEICGAQVNGDELGSQQLRFTPGPIRGGEYRFAIGSAGSCMLVLQTVLPALWFADGSSRVEVHGGTHNQAAPSADFICRVWEPLLARMGISQRTTLIKHGFYPAGGGAAATVVEPATSLRGLTLISRGETLRTTAEALLAAVPYHVGEREVATLEAHFPQAEKNVVALEGGCGPGNALSLMIQSEQLTELFVAFGVKGTSAEAVANQVAHEARRYLASPAAVGEHLADQLILPLALAGEGAFTVARASAHLLTNIAVVERFLPVTFNLEEARGMVQVMVSKKDSGS.

Residues Gln-103 and 283-287 (HLADQ) contribute to the ATP site. Catalysis depends on His-308, which acts as the Tele-AMP-histidine intermediate.

The protein belongs to the RNA 3'-terminal cyclase family. Type 1 subfamily.

The protein localises to the cytoplasm. The catalysed reaction is a 3'-end 3'-phospho-ribonucleotide-RNA + ATP = a 3'-end 2',3'-cyclophospho-ribonucleotide-RNA + AMP + diphosphate. In terms of biological role, catalyzes the conversion of 3'-phosphate to a 2',3'-cyclic phosphodiester at the end of RNA. The mechanism of action of the enzyme occurs in 3 steps: (A) adenylation of the enzyme by ATP; (B) transfer of adenylate to an RNA-N3'P to produce RNA-N3'PP5'A; (C) and attack of the adjacent 2'-hydroxyl on the 3'-phosphorus in the diester linkage to produce the cyclic end product. The biological role of this enzyme is unknown but it is likely to function in some aspects of cellular RNA processing. The sequence is that of RNA 3'-terminal phosphate cyclase from Salmonella paratyphi C (strain RKS4594).